The primary structure comprises 495 residues: Ankyrin repeat domain-containing protein 34A (495 aa).

ANK repeat units lie at residues 4 to 33 (TEGHALLRAVGQGKLRLARLLLEGGAYVNE), 37 to 72 (QGETALMAACRARYDDPQNKARMVRYLLEQGADPNI), 76 to 106 (LGRTALMHACAGGGGAAVASLLLAHGADPSV), and 110 to 139 (AGASALVHALDRGDRETLATLLDACKAKGT). An N5-methylglutamine modification is found at glutamine 15. 2 stretches are compositionally biased toward polar residues: residues 147–162 (DTSPSGTKKTRQYLNS) and 180–191 (VCTSPSEVQLQT). The disordered stretch occupies residues 147 to 495 (DTSPSGTKKT…SLGGPGEPGR (349 aa)). Basic and acidic residues predominate over residues 203–213 (AQEEEEKRDVF). The span at 223–232 (DPSPSEPLPK) shows a compositional bias: pro residues. A compositionally biased stretch (basic residues) spans 233-242 (PPRHPPKPLK). At threonine 315 the chain carries Phosphothreonine. A compositionally biased stretch (polar residues) spans 375–385 (SVSSPRQSQES). Positions 462–472 (RTKRKLVRRHS) are enriched in basic residues. The span at 485 to 495 (QSLGGPGEPGR) shows a compositional bias: gly residues.

The protein belongs to the ANKRD34 family. Methylated at Gln-15 by N6AMT1.

This chain is Ankyrin repeat domain-containing protein 34A (Ankrd34a), found in Rattus norvegicus (Rat).